The primary structure comprises 165 residues: Chorismate pyruvate-lyase (165 aa).

The substrate site is built by M35, R77, L115, and E156.

It belongs to the UbiC family. Monomer.

Its subcellular location is the cytoplasm. The catalysed reaction is chorismate = 4-hydroxybenzoate + pyruvate. It functions in the pathway cofactor biosynthesis; ubiquinone biosynthesis. Removes the pyruvyl group from chorismate, with concomitant aromatization of the ring, to provide 4-hydroxybenzoate (4HB) for the ubiquinone pathway. The chain is Chorismate pyruvate-lyase from Salmonella agona (strain SL483).